A 407-amino-acid polypeptide reads, in one-letter code: MEITLGIAMFTVIVLALAVIILFAKSKLVNSGDITIEINDDPSKAIHLPAGGKLLGALASQGIFVSSACGGGGSCGQCIVKVTEGGGDILPTELSHISKREAKEGYRLSCQVNVKNSMKVELPEEVFGVKKWECTVISNDNKATFIKELKLAIPEGEEVPFRAGGYIQIEAEPHTVAYKDFDIPEEYHEDWDKYNLWRYVSKVDEHIIRAYSMASYPEEKGIIMLNVRIATPPPNNPDAPPGQMSSYIWSLKAGDKVTISGPFGEFFAKETDAEMVFVGGGAGMAPMRSHIFDQLKRLKSKRKMSFWYGARSKREMFYVEDFDTLQAENDNFVWHVALSDPQPGDNWDGYTGFIHNVLYENYLKDHEAPEDCEYYMCGPPIMNASVIKMLKDLGVEDENILLDDFGG.

Residues 3–23 (ITLGIAMFTVIVLALAVIILF) traverse the membrane as a helical segment. One can recognise a 2Fe-2S ferredoxin-type domain in the interval 32–126 (GDITIEINDD…SMKVELPEEV (95 aa)). [2Fe-2S] cluster is bound by residues Cys-69, Cys-75, Cys-78, and Cys-110. The 141-residue stretch at 129–269 (VKKWECTVIS…SGPFGEFFAK (141 aa)) folds into the FAD-binding FR-type domain. A catalytic region spans residues 272 to 389 (DAEMVFVGGG…PIMNASVIKM (118 aa)).

This sequence belongs to the NqrF family. As to quaternary structure, composed of six subunits; NqrA, NqrB, NqrC, NqrD, NqrE and NqrF. [2Fe-2S] cluster is required as a cofactor. FAD serves as cofactor.

The protein resides in the cell inner membrane. It catalyses the reaction a ubiquinone + n Na(+)(in) + NADH + H(+) = a ubiquinol + n Na(+)(out) + NAD(+). Its function is as follows. NQR complex catalyzes the reduction of ubiquinone-1 to ubiquinol by two successive reactions, coupled with the transport of Na(+) ions from the cytoplasm to the periplasm. The first step is catalyzed by NqrF, which accepts electrons from NADH and reduces ubiquinone-1 to ubisemiquinone by a one-electron transfer pathway. The polypeptide is Na(+)-translocating NADH-quinone reductase subunit F (Pasteurella multocida (strain Pm70)).